A 242-amino-acid chain; its full sequence is Biosynthetic peptidoglycan transglycosylase (242 aa).

Residues 19 to 39 (LMVVLAIFWGGGIALFSVAPV) form a helical membrane-spanning segment.

Belongs to the glycosyltransferase 51 family.

It localises to the cell inner membrane. It catalyses the reaction [GlcNAc-(1-&gt;4)-Mur2Ac(oyl-L-Ala-gamma-D-Glu-L-Lys-D-Ala-D-Ala)](n)-di-trans,octa-cis-undecaprenyl diphosphate + beta-D-GlcNAc-(1-&gt;4)-Mur2Ac(oyl-L-Ala-gamma-D-Glu-L-Lys-D-Ala-D-Ala)-di-trans,octa-cis-undecaprenyl diphosphate = [GlcNAc-(1-&gt;4)-Mur2Ac(oyl-L-Ala-gamma-D-Glu-L-Lys-D-Ala-D-Ala)](n+1)-di-trans,octa-cis-undecaprenyl diphosphate + di-trans,octa-cis-undecaprenyl diphosphate + H(+). It participates in cell wall biogenesis; peptidoglycan biosynthesis. Functionally, peptidoglycan polymerase that catalyzes glycan chain elongation from lipid-linked precursors. The polypeptide is Biosynthetic peptidoglycan transglycosylase (Escherichia coli O81 (strain ED1a)).